The sequence spans 610 residues: All-trans-retinol 13,14-reductase (610 aa).

The N-terminal stretch at 1 to 18 (MWLPLVLFLAVLLLAVVC) is a signal peptide.

Belongs to the carotenoid/retinoid oxidoreductase family. CrtISO subfamily. Requires NAD(+) as cofactor. NADP(+) serves as cofactor. The cofactor is FAD.

It localises to the endoplasmic reticulum membrane. The enzyme catalyses all-trans-13,14-dihydroretinol + A = all-trans-retinol + AH2. In terms of biological role, catalyzes the saturation of all-trans-retinol to all-trans-13,14-dihydroretinol. Does not exhibit any activity toward all-trans-retinoic acid, nor 9-cis, 11-cis or 13-cis-retinol isomers. May play a role in the metabolism of vitamin A. Independently of retinol conversion, may regulate liver metabolism upstream of MLXIPL/ChREBP. May play a role in adipocyte differentiation. This Macaca fascicularis (Crab-eating macaque) protein is All-trans-retinol 13,14-reductase (RETSAT).